Consider the following 110-residue polypeptide: Ig lambda-1 chain V region S178 (110 aa).

One can recognise an Ig-like domain in the interval 1–106 (QAVVTQESAL…RWVFGGGTKL (106 aa)).

This is Ig lambda-1 chain V region S178 from Mus musculus (Mouse).